Reading from the N-terminus, the 646-residue chain is Epithelial sodium channel subunit beta-2 (646 aa).

Residues Met-1–Met-57 lie on the Cytoplasmic side of the membrane. A helical membrane pass occupies residues Trp-58 to Leu-78. The Extracellular portion of the chain corresponds to Thr-79 to Gly-551. 8 disulfide bridges follow: Cys-104–Cys-290, Cys-214–Cys-221, Cys-267–Cys-274, Cys-380–Cys-467, Cys-405–Cys-463, Cys-409–Cys-459, Cys-418–Cys-445, and Cys-420–Cys-434. A helical transmembrane segment spans residues Ser-552–Leu-572. Residues Lys-573–Asn-646 are Cytoplasmic-facing. Positions Gln-586–Asn-646 are disordered. A compositionally biased stretch (basic and acidic residues) spans Gln-610–Glu-619.

The protein belongs to the amiloride-sensitive sodium channel (TC 1.A.6) family. SCNN1B subfamily. In terms of assembly, component of the heterotrimeric epithelial sodium channel (ENaC) composed of an alpha/SCNN1A, a beta/SCNN1B and a gamma/SCNN1G subunit.

It localises to the apical cell membrane. It is found in the cytoplasmic vesicle membrane. The enzyme catalyses Na(+)(in) = Na(+)(out). Its activity is regulated as follows. Originally identified and characterized by its inhibition by the diuretic drug amiloride. Functionally, this is one of the three pore-forming subunits of the heterotrimeric epithelial sodium channel (ENaC), a critical regulator of sodium balance and fluid homeostasis. ENaC operates in epithelial tissues, where it mediates the electrodiffusion of sodium ions from extracellular fluid through the apical membrane of cells, with water following osmotically. The protein is Epithelial sodium channel subunit beta-2 (scnn1b-b) of Xenopus laevis (African clawed frog).